The following is an 86-amino-acid chain: Large ribosomal subunit protein bL27c (86 aa).

The disordered stretch occupies residues 1 to 27 (MAHKKGSGSTRNGRDSNSKRLGVKKYG).

This sequence belongs to the bacterial ribosomal protein bL27 family.

The protein localises to the plastid. It is found in the chloroplast. This is Large ribosomal subunit protein bL27c from Pyropia yezoensis (Susabi-nori).